Consider the following 256-residue polypeptide: Nuclear shuttle protein (256 aa).

The Bipartite nuclear localization signal signature appears at 21-42 (NYGFKRTFVVKRGDAKRRQTQV). The short motif at 81 to 96 (QLCKTQPNRSRSYIKL) is the Nuclear localization signal element. Residues 150–187 (ELFGARIHSLGNLAVTPALKERFYILHVLKRVISVEKD) form an interaction with Arabidopsis thaliana NSI protein region.

This sequence belongs to the begomovirus nuclear shuttle protein family. As to quaternary structure, binds to single-stranded and double-stranded viral DNA. Interacts with the host nuclear shuttle interacting (NSI) protein. This interaction may allow NSP to recruit NSI monomers to the viral genome and thus regulate nuclear export of viral genome by NSP.

The protein resides in the host nucleus. Its subcellular location is the host cytoplasm. It is found in the host cell membrane. Binds to the genomic viral ssDNA, shuttles it into and out of the cell nucleus. Begomoviruses use 2 proteins to transport their DNA from cell to cell. The nuclear shuttle protein (NSP) shuttles it between nucleus and cytoplasm and the movement protein (MP) probably transports the DNA-NSP complex to the cell periphery and facilitates movement across the cell wall. This is Nuclear shuttle protein from Pepper huasteco yellow vein virus (PHYVV).